Consider the following 490-residue polypeptide: ATP synthase subunit beta, chloroplastic (490 aa).

170–177 (GGAGVGKT) contacts ATP.

Belongs to the ATPase alpha/beta chains family. In terms of assembly, F-type ATPases have 2 components, CF(1) - the catalytic core - and CF(0) - the membrane proton channel. CF(1) has five subunits: alpha(3), beta(3), gamma(1), delta(1), epsilon(1). CF(0) has four main subunits: a(1), b(1), b'(1) and c(9-12).

It is found in the plastid. The protein resides in the chloroplast thylakoid membrane. It catalyses the reaction ATP + H2O + 4 H(+)(in) = ADP + phosphate + 5 H(+)(out). In terms of biological role, produces ATP from ADP in the presence of a proton gradient across the membrane. The catalytic sites are hosted primarily by the beta subunits. The protein is ATP synthase subunit beta, chloroplastic of Ipomoea quamoclit (Cypress vine).